Here is a 346-residue protein sequence, read N- to C-terminus: PhoH-like protein (346 aa).

An ATP-binding site is contributed by 142 to 149; sequence GPAGTGKT.

Belongs to the PhoH family.

Its subcellular location is the cytoplasm. The polypeptide is PhoH-like protein (ybeZ) (Escherichia coli O157:H7).